The following is a 326-amino-acid chain: E3 ubiquitin-protein ligase SINAT3 (326 aa).

Residues 1-44 (MDLDSMDCTSTMDVTDDEEIHQDRHSYASVSKHHHTNNNTTNVN) form a disordered region. Residues 63–99 (CPVCTNSMYPPIHQCHNGHTLCSTCKARVHNRCPTCR) form an RING-type zinc finger. Residues 113 to 306 (VAESLELPCK…KELKLRVTGR (194 aa)) form an SBD region. The SIAH-type zinc-finger motif lies at 116–176 (SLELPCKHMS…LVAHLRDDHK (61 aa)). Positions 121, 128, 140, 144, 151, 158, 170, and 175 each coordinate Zn(2+).

This sequence belongs to the SINA (Seven in absentia) family. Interacts with SINAT6. Interacts with WAV3. Interacts with FREE1. Interacts with ELC/VPS23A.

The protein resides in the endosome. It is found in the multivesicular body. The protein localises to the cytoplasmic vesicle. Its subcellular location is the autophagosome. The enzyme catalyses S-ubiquitinyl-[E2 ubiquitin-conjugating enzyme]-L-cysteine + [acceptor protein]-L-lysine = [E2 ubiquitin-conjugating enzyme]-L-cysteine + N(6)-ubiquitinyl-[acceptor protein]-L-lysine.. The protein operates within protein modification; protein ubiquitination. Functionally, E3 ubiquitin-protein ligase that mediates ubiquitination and subsequent proteasomal degradation of target proteins. E3 ubiquitin ligases accept ubiquitin from an E2 ubiquitin-conjugating enzyme in the form of a thioester and then directly transfers the ubiquitin to targeted substrates. It probably triggers the ubiquitin-mediated degradation of different substrates. Modulates directly the ubiquitination and proteasomal-dependent degradation of FREE1, a component of the ESCRT-I complex. Modulates directly the ubiquitination and proteasomal-dependent degradation of ELC/VPS23A, a component of the ESCRT-I complex. The protein is E3 ubiquitin-protein ligase SINAT3 of Arabidopsis thaliana (Mouse-ear cress).